The primary structure comprises 243 residues: 4-hydroxy-tetrahydrodipicolinate reductase (243 aa).

Residues 9–14, 78–80, and 104–107 contribute to the NAD(+) site; these read GANGKM, GTS, and APNF. Residue H134 is the Proton donor/acceptor of the active site. Residue H135 coordinates (S)-2,3,4,5-tetrahydrodipicolinate. Catalysis depends on K138, which acts as the Proton donor. (S)-2,3,4,5-tetrahydrodipicolinate is bound at residue 144 to 145; the sequence is GT.

This sequence belongs to the DapB family.

The protein localises to the cytoplasm. The catalysed reaction is (S)-2,3,4,5-tetrahydrodipicolinate + NAD(+) + H2O = (2S,4S)-4-hydroxy-2,3,4,5-tetrahydrodipicolinate + NADH + H(+). The enzyme catalyses (S)-2,3,4,5-tetrahydrodipicolinate + NADP(+) + H2O = (2S,4S)-4-hydroxy-2,3,4,5-tetrahydrodipicolinate + NADPH + H(+). The protein operates within amino-acid biosynthesis; L-lysine biosynthesis via DAP pathway; (S)-tetrahydrodipicolinate from L-aspartate: step 4/4. Functionally, catalyzes the conversion of 4-hydroxy-tetrahydrodipicolinate (HTPA) to tetrahydrodipicolinate. The chain is 4-hydroxy-tetrahydrodipicolinate reductase from Legionella pneumophila (strain Lens).